Here is a 198-residue protein sequence, read N- to C-terminus: tRNA (pseudouridine(54)-N(1))-methyltransferase (198 aa).

S-adenosyl-L-methionine contacts are provided by Leu134 and Gly155.

It belongs to the methyltransferase superfamily. TrmY family. In terms of assembly, homodimer.

Its subcellular location is the cytoplasm. It catalyses the reaction pseudouridine(54) in tRNA + S-adenosyl-L-methionine = N(1)-methylpseudouridine(54) in tRNA + S-adenosyl-L-homocysteine + H(+). Functionally, specifically catalyzes the N1-methylation of pseudouridine at position 54 (Psi54) in tRNAs. This chain is tRNA (pseudouridine(54)-N(1))-methyltransferase, found in Thermococcus kodakarensis (strain ATCC BAA-918 / JCM 12380 / KOD1) (Pyrococcus kodakaraensis (strain KOD1)).